A 74-amino-acid chain; its full sequence is Large ribosomal subunit protein uL30 (74 aa).

It belongs to the universal ribosomal protein uL30 family. As to quaternary structure, part of the 50S ribosomal subunit.

The chain is Large ribosomal subunit protein uL30 from Micrococcus luteus (strain ATCC 4698 / DSM 20030 / JCM 1464 / CCM 169 / CCUG 5858 / IAM 1056 / NBRC 3333 / NCIMB 9278 / NCTC 2665 / VKM Ac-2230) (Micrococcus lysodeikticus).